Here is a 316-residue protein sequence, read N- to C-terminus: HTH-type transcriptional regulator cbl (316 aa).

One can recognise an HTH lysR-type domain in the interval 1 to 59; it reads MNFQQLKIIREAARQDYNLTEVANMLFTSQSGVSRHIRELEDELGIEIFVRRGKRLLGM. The H-T-H motif DNA-binding region spans 19-38; it reads LTEVANMLFTSQSGVSRHIR.

The protein belongs to the LysR transcriptional regulatory family.

May be an accessory regulatory protein within the cys regulon. The chain is HTH-type transcriptional regulator cbl (cbl) from Escherichia coli (strain K12).